The sequence spans 86 residues: CLAVATA3/ESR (CLE)-related protein 7 (86 aa).

The N-terminal stretch at 1–22 (MASKALLLFVMLTFLLVIEMEG) is a signal peptide. N-linked (GlcNAc...) asparagine glycosylation is present at N46. A disordered region spans residues 63–86 (VDRFSPGGPDPQHHSYPLSSKPRI). Hydroxyproline is present on residues P68 and P71. Residue P71 is glycosylated (O-linked (Ara...) hydroxyproline).

This sequence belongs to the CLV3/ESR signal peptide family. In terms of processing, the O-glycosylation (arabinosylation) of the hydroxyproline Pro-71 enhances binding affinity of the CLE7p peptide for its receptor. Expressed in roots and seedlings.

Its subcellular location is the secreted. The protein localises to the extracellular space. Extracellular signal peptide that regulates cell fate. The polypeptide is CLAVATA3/ESR (CLE)-related protein 7 (Arabidopsis thaliana (Mouse-ear cress)).